We begin with the raw amino-acid sequence, 377 residues long: MCVTSRADKMPSVKPKKKKIKKEINEVEEPEAGPEPAIEMEGLESRRQSESREPLTPEPHDNPPLKKKKKKKTHTFENEGEQQDHPNGDVQESPTDGEEVTKKSKKKRKNKMMENQSHNELGVEEDDIITDVHAPISQRSLFSAPLSHSHPIGKVFVEKNRRFQATDLSHDHLEEYMEVRPMWNTRDVAMRVHSGFRIIGLFSHGFLAGYAVWNIIVVYVLAGEQMTTLPNLLQQYHSLAYPAQSLLYLLLAISTVSAFDRVNLAKASMALRGFLTLDPAALASFLYFAALILSLSQQMTSDRIHLYPTANETLWPPGLEHQILQPWIVVNLVVALLVGLAWVFVATRPDMDYTEEFLMAMEVEEYPRHDDKHELAA.

Composition is skewed to basic and acidic residues over residues 1-11, 43-64, and 74-87; these read MCVTSRADKMP, LESR…DNPP, and HTFE…DHPN. The interval 1 to 124 is disordered; it reads MCVTSRADKM…NQSHNELGVE (124 aa). 4 consecutive transmembrane segments (helical) span residues 198–218, 239–259, 273–293, and 326–346; these read IIGL…IIVV, LAYP…VSAF, GFLT…ALIL, and PWIV…VFVA.

Belongs to the TMEM237 family.

The protein localises to the membrane. It localises to the cell projection. Its subcellular location is the cilium. Component of the transition zone in primary cilia. Required for ciliogenesis. This is Transmembrane protein 237A (tmem237a) from Danio rerio (Zebrafish).